The chain runs to 182 residues: Orotate phosphoribosyltransferase (182 aa).

5-phospho-alpha-D-ribose 1-diphosphate contacts are provided by residues arginine 93, lysine 94, lysine 97, and 119-127 (EDIATTGTS). Positions 123 and 151 each coordinate orotate.

Belongs to the purine/pyrimidine phosphoribosyltransferase family. PyrE subfamily. Homodimer. The cofactor is Mg(2+).

It carries out the reaction orotidine 5'-phosphate + diphosphate = orotate + 5-phospho-alpha-D-ribose 1-diphosphate. It functions in the pathway pyrimidine metabolism; UMP biosynthesis via de novo pathway; UMP from orotate: step 1/2. Catalyzes the transfer of a ribosyl phosphate group from 5-phosphoribose 1-diphosphate to orotate, leading to the formation of orotidine monophosphate (OMP). The sequence is that of Orotate phosphoribosyltransferase from Haloquadratum walsbyi (strain DSM 16790 / HBSQ001).